The sequence spans 352 residues: Phenylalanine--tRNA ligase alpha subunit (352 aa).

Residue E258 participates in Mg(2+) binding.

This sequence belongs to the class-II aminoacyl-tRNA synthetase family. Phe-tRNA synthetase alpha subunit type 1 subfamily. Tetramer of two alpha and two beta subunits. The cofactor is Mg(2+).

It is found in the cytoplasm. It catalyses the reaction tRNA(Phe) + L-phenylalanine + ATP = L-phenylalanyl-tRNA(Phe) + AMP + diphosphate + H(+). This chain is Phenylalanine--tRNA ligase alpha subunit, found in Staphylococcus haemolyticus (strain JCSC1435).